Reading from the N-terminus, the 196-residue chain is Urease accessory protein UreE (196 aa).

The segment at 150–196 is disordered; sequence RGAYSGGHDHGHAHAHSHAEAHSHAHGESHSHSHSHSHDDHHHHDHD. Residues 156-196 are compositionally biased toward basic and acidic residues; the sequence is GHDHGHAHAHSHAEAHSHAHGESHSHSHSHSHDDHHHHDHD.

It belongs to the UreE family.

The protein resides in the cytoplasm. Functionally, involved in urease metallocenter assembly. Binds nickel. Probably functions as a nickel donor during metallocenter assembly. The polypeptide is Urease accessory protein UreE (Mesorhizobium japonicum (strain LMG 29417 / CECT 9101 / MAFF 303099) (Mesorhizobium loti (strain MAFF 303099))).